We begin with the raw amino-acid sequence, 167 residues long: uncharacterized protein (167 aa).

It localises to the plastid. It is found in the chloroplast. This is an uncharacterized protein from Mesostigma viride (Green alga).